The sequence spans 29 residues: Galanin (29 aa).

Alanine 29 carries the alanine amide modification.

Belongs to the galanin family.

The protein localises to the secreted. In terms of biological role, contracts smooth muscle of the gastrointestinal and genitourinary tract, regulates growth hormone release, modulates insulin release, and may be involved in the control of adrenal secretion. The polypeptide is Galanin (gal) (Pelophylax ridibundus (Marsh frog)).